We begin with the raw amino-acid sequence, 401 residues long: Elongation factor Tu, apicoplast (401 aa).

The tr-type G domain maps to 10 to 206; that stretch reads KPHINIGTIG…ALDSYIPLPK (197 aa). Residues 19–26 form a G1 region; it reads GHVDHGKT. 19-26 is a GTP binding site; the sequence is GHVDHGKT. T26 is a binding site for Mg(2+). The interval 60–64 is G2; the sequence is GITIK. Positions 81 to 84 are G3; that stretch reads DCPG. GTP contacts are provided by residues 81–85 and 136–139; these read DCPGH and NKID. The interval 136–139 is G4; it reads NKID. Residues 173 to 175 are G5; the sequence is SAL.

Belongs to the TRAFAC class translation factor GTPase superfamily. Classic translation factor GTPase family. EF-Tu/EF-1A subfamily. Monomer.

The protein localises to the plastid. Its subcellular location is the apicoplast. It carries out the reaction GTP + H2O = GDP + phosphate + H(+). Functionally, GTP hydrolase that promotes the GTP-dependent binding of aminoacyl-tRNA to the A-site of ribosomes during protein biosynthesis. This chain is Elongation factor Tu, apicoplast (tufA), found in Toxoplasma gondii.